Consider the following 297-residue polypeptide: MEIFKLLRKDRKMLFLMFIGTVSFLFIFIPFLKFQMIGSSHKINAYPSLSAVCGLLLGPIYGFFAVMLVTLIYFFLNPKAFYFGIYSLIPPTLAVISAGALSEGKWKYSAIILIVGLLLFYLTDVGRVAFYYPYLSTLALLLILIFREKISKLLFSKDWKKMIVGATILSFSSVMTDHLYGSILGIVYLHLPAEDYISVIPLFIKERLIMTVIGAFFVIFAIEISKCFLKNATKLKEKLLKSYIDKEIKINCKNMLNVDEELLKKYNVKIPSEEEQKEILKTLVEVVVFNNDKDENR.

7 helical membrane passes run 14–34 (LFLMFIGTVSFLFIFIPFLKF), 55–75 (LLLGPIYGFFAVMLVTLIYFF), 81–101 (FYFGIYSLIPPTLAVISAGAL), 110–130 (AIILIVGLLLFYLTDVGRVAF), 135–155 (LSTLALLLILIFREKISKLLF), 163–183 (IVGATILSFSSVMTDHLYGSI), and 208–228 (LIMTVIGAFFVIFAIEISKCF).

The protein localises to the cell membrane. This is an uncharacterized protein from Methanocaldococcus jannaschii (strain ATCC 43067 / DSM 2661 / JAL-1 / JCM 10045 / NBRC 100440) (Methanococcus jannaschii).